The sequence spans 284 residues: Putative transcription factor kapC (284 aa).

Pro residues predominate over residues 1–10; sequence MQPTLAPAPH. The interval 1–121 is disordered; that stretch reads MQPTLAPAPH…NRAAQRAFRQ (121 aa). The segment covering 26 to 40 has biased composition (low complexity); it reads HDQLLAAHQHLSHPQ. Positions 41–54 are enriched in pro residues; the sequence is QPRPQPPAAQPPHM. The segment covering 57-67 has biased composition (polar residues); it reads NTTSPRDQNNI. The bZIP domain occupies 102–165; sequence PLSTSKRAAQ…EYIINLQSRL (64 aa). The segment at 103–126 is basic motif; sequence LSTSKRAAQNRAAQRAFRQRKESY. The segment covering 108–118 has biased composition (low complexity); the sequence is RAAQNRAAQRA. The segment at 130–161 is leucine-zipper; sequence LEEQVKEFDTMSEAFKALQAENYQLREYIINL. The interval 174-284 is disordered; sequence ELPGNIDLSQ…QAPHGLPMVS (111 aa). The segment covering 193 to 222 has biased composition (low complexity); the sequence is PGAGPATTSSSAPAPPSGAQQAQPPQGAAS.

This sequence belongs to the bZIP family.

It is found in the nucleus. In terms of biological role, putative transcription factor. This is Putative transcription factor kapC (kapC) from Aspergillus oryzae (strain ATCC 42149 / RIB 40) (Yellow koji mold).